A 204-amino-acid chain; its full sequence is Protein phosphatase 1 regulatory subunit 1B (204 aa).

Met1 is subject to N-acetylmethionine. Positions 1–204 are disordered; the sequence is MDPKDRKKIQ…QRPSPSEPGT (204 aa). Thr34 is modified (phosphothreonine; by PKA). Residues 41 to 63 are compositionally biased toward basic and acidic residues; it reads LSEHSSPEEEASPHQRASGEGHH. Phosphoserine is present on residues Ser45 and Ser46. Thr75 is subject to Phosphothreonine; by CDK5. Residues 89–100 show a composition bias toward polar residues; sequence HLQSISNLNENQ. Ser102 is subject to Phosphoserine. The span at 109–118 shows a compositional bias: basic and acidic residues; it reads GELRELGYPR. Composition is skewed to acidic residues over residues 119-138 and 170-183; these read EEDE…EDSQ and DESE…DQVE. Ser137 is modified (phosphoserine). The residue at position 198 (Ser198) is a Phosphoserine.

Belongs to the protein phosphatase inhibitor 1 family. In terms of processing, dopamine- and cyclic AMP-regulated neuronal phosphoprotein. Post-translationally, phosphorylation of Thr-34 is required for activity.

It is found in the cytoplasm. In terms of biological role, inhibitor of protein-phosphatase 1. This is Protein phosphatase 1 regulatory subunit 1B (PPP1R1B) from Homo sapiens (Human).